The chain runs to 523 residues: MAVSKNIKSNVSTHVTKKATKKTTNNGEESKTVKKAVNNKLLSDEINEILHSSENIKKSIDPESMDYFGDSAKVSKSDENFGEIEDDNRGTRLKGDIPTEFTSGKYSGKKSSRKDNDMEEDDELDQDNEYDIFGGDKQDDDDGDDDNSEDLDDAFDFQDKQDDDDDDDDKEDDDEDDDDDENVVVSSNIDRADMLFKKLQKQEKEEEKQPKLVGHTNEADEMEKAQNTKNQTALYNEFLTTRILLQKTINCANKLPKPKIYKEFLELNDESLQKKFKETKTASCLLISELYNLQSELIDLNDEIPKQQQSKKRIRPDQSLSEIWNTIEEQNQRLDQFHNQTITKWNNRISVTSSINSGGKGGNNLKSLNQSILSQIQNTLNDFERLQKRTKLKRTTYRIIGEKQQQLSSANSIDQNEEEKDEYDDEIFDDTDFYQTLLKDLEANNSEENEVGSQYWIEMRNLKKKKKKKVNQKASKGRILRYEVFPKLENFMTPQSLPIPDWNIDQLYQNLFGGLGNVNINLN.

The segment covering 1-14 (MAVSKNIKSNVSTH) has biased composition (polar residues). Disordered regions lie at residues 1–36 (MAVS…VKKA), 51–187 (HSSE…VVSS), and 200–224 (QKQE…EMEK). A compositionally biased stretch (basic and acidic residues) spans 87 to 97 (DNRGTRLKGDI). Acidic residues-rich tracts occupy residues 117–130 (DMEE…DNEY) and 138–182 (QDDD…DDEN). Over residues 200–210 (QKQEKEEEKQP) the composition is skewed to basic and acidic residues.

This sequence belongs to the AATF family.

This is an uncharacterized protein from Dictyostelium discoideum (Social amoeba).